A 288-amino-acid polypeptide reads, in one-letter code: MSQTYLSLTVELPEEASEAVQDLLHESGALGLEVRDREAPLMPGVRGPNPGEAIIIGYFDERDTAESARDEVASSFPEAKLTLDEQPQQDWSNEWKSLIKSVHVGRLWVGPPWDKANAPAGTVQLVIEPKMAFGTGDHPTTSLCLAAVDAYMAEHPGAAVLDVGTGTGVLAIAAKKLGAGRTVATDNDPISVELAQENQAENGTPDIEVSGKELTQVEGTFDLVLANILANTLIELAPLIVAKTKDRLVLAGVLSHQRADVEAAYRNLGLTVLTGATQGEWVRIDLQR.

S-adenosyl-L-methionine is bound by residues Thr141, Gly164, Asp186, and Asn227.

This sequence belongs to the methyltransferase superfamily. PrmA family.

The protein localises to the cytoplasm. The enzyme catalyses L-lysyl-[protein] + 3 S-adenosyl-L-methionine = N(6),N(6),N(6)-trimethyl-L-lysyl-[protein] + 3 S-adenosyl-L-homocysteine + 3 H(+). Functionally, methylates ribosomal protein L11. This chain is Ribosomal protein L11 methyltransferase, found in Myxococcus xanthus (strain DK1622).